The following is a 337-amino-acid chain: ATP-dependent 6-phosphofructokinase (337 aa).

G11 lines the ATP pocket. 21-25 (RAVVR) contacts ADP. ATP contacts are provided by residues 72–73 (RY) and 102–105 (GDGS). D103 contributes to the Mg(2+) binding site. 125 to 127 (TID) contacts substrate. Residue D127 is the Proton acceptor of the active site. An ADP-binding site is contributed by R154. Residues R162 and 169–171 (MGR) each bind substrate. ADP-binding positions include 185–187 (GAD), R212, and 214–216 (KNH). Residues E223, R245, and 251-254 (HILR) contribute to the substrate site.

This sequence belongs to the phosphofructokinase type A (PFKA) family. ATP-dependent PFK group I subfamily. Prokaryotic clade 'B1' sub-subfamily. Homotetramer. It depends on Mg(2+) as a cofactor.

It is found in the cytoplasm. The enzyme catalyses beta-D-fructose 6-phosphate + ATP = beta-D-fructose 1,6-bisphosphate + ADP + H(+). It functions in the pathway carbohydrate degradation; glycolysis; D-glyceraldehyde 3-phosphate and glycerone phosphate from D-glucose: step 3/4. With respect to regulation, allosterically activated by ADP and other diphosphonucleosides, and allosterically inhibited by phosphoenolpyruvate. In terms of biological role, catalyzes the phosphorylation of D-fructose 6-phosphate to fructose 1,6-bisphosphate by ATP, the first committing step of glycolysis. This is ATP-dependent 6-phosphofructokinase from Streptococcus equi subsp. equi (strain 4047).